The following is a 241-amino-acid chain: MQQFQQDNQYFIFNFDRTFEQATEFFQAEFWQKQERVIGSAKGRGTTYFLQTEDWFGVNCALRHYYRGGLWGKLNKDRYRFSALETTRSFAEFHLLQRLYEAGLPVPKPIAARIQKGKLGICYQADILTEKIENAQDLTALLQTQTLPKETWRQIGRLIRKLHDLQICHTDLNAHNILLQQAEQGQKCWLLDFDKCGEKSGDFWKVQNLNRLKRSFEKEVGRMNIQFTEQNWADLMAAYHQ.

Residue D171 is part of the active site.

This sequence belongs to the protein kinase superfamily. KdkA/RfaP family.

It is found in the cell inner membrane. The catalysed reaction is an alpha-Kdo-(2-&gt;6)-lipid IVA + ATP = a 4-O-phospho-alpha-Kdo-(2-&gt;6)-lipid IVA + ADP + H(+). The protein operates within bacterial outer membrane biogenesis; LPS core biosynthesis. Functionally, catalyzes the ATP-dependent phosphorylation of the 3-deoxy-D-manno-octulosonic acid (Kdo) residue in Kdo-lipid IV(A) at the 4-OH position. This is 3-deoxy-D-manno-octulosonic acid kinase from Haemophilus influenzae (strain PittEE).